The primary structure comprises 147 residues: Hemoglobin subunit gamma (147 aa).

In terms of domain architecture, Globin spans 3–147 (NFTAEDKAAI…VASALASRYH (145 aa)). Residues H64 and H93 each contribute to the heme b site.

This sequence belongs to the globin family. As to quaternary structure, heterotetramer of two alpha chains and two gamma chains in fetal hemoglobin (Hb F). Red blood cells.

Functionally, gamma chains make up the fetal hemoglobin F, in combination with alpha chains. The chain is Hemoglobin subunit gamma (HBG) from Alouatta seniculus (Red howler monkey).